The chain runs to 363 residues: Putative agmatine deiminase 1 (363 aa).

The active-site Amidino-cysteine intermediate is C356.

This sequence belongs to the agmatine deiminase family.

The catalysed reaction is agmatine + H2O = N-carbamoylputrescine + NH4(+). This chain is Putative agmatine deiminase 1, found in Listeria monocytogenes serovar 1/2a (strain ATCC BAA-679 / EGD-e).